The following is a 201-amino-acid chain: Glycerol-3-phosphate acyltransferase (201 aa).

5 helical membrane passes run 10 to 30, 60 to 80, 86 to 106, 116 to 136, and 166 to 186; these read MLIGALIFGYVLGSIPFGLIL, LAAATLILDALKGTAAALIAA, AAIAAGFGAFIGHLFPVWIGF, LGVLIGLAWAGALVFAAAWIV, and ALAALFAIMTVIVFIKHRANI.

It belongs to the PlsY family. In terms of assembly, probably interacts with PlsX.

It is found in the cell inner membrane. It catalyses the reaction an acyl phosphate + sn-glycerol 3-phosphate = a 1-acyl-sn-glycero-3-phosphate + phosphate. Its pathway is lipid metabolism; phospholipid metabolism. Its function is as follows. Catalyzes the transfer of an acyl group from acyl-phosphate (acyl-PO(4)) to glycerol-3-phosphate (G3P) to form lysophosphatidic acid (LPA). This enzyme utilizes acyl-phosphate as fatty acyl donor, but not acyl-CoA or acyl-ACP. The protein is Glycerol-3-phosphate acyltransferase of Brucella canis (strain ATCC 23365 / NCTC 10854 / RM-666).